A 535-amino-acid polypeptide reads, in one-letter code: Cytochrome P450 monooxygenase BOA7 (535 aa).

Residues 20-37 form a helical membrane-spanning segment; that stretch reads SIFLILGFFVLAAILIAW. N-linked (GlcNAc...) asparagine glycans are attached at residues N65, N148, N180, and N420. Heme is bound at residue C478.

Belongs to the cytochrome P450 family. Requires heme as cofactor.

It is found in the membrane. Its pathway is polyketide biosynthesis. Functionally, cytochrome P450 monooxygenase; part of the gene cluster B that mediates the biosynthesis of botcinic acid and its botcinin derivatives, acetate-derived polyketides that contribute to virulence when combined with the sesquiterpene botrydial. Botcinic acid and its derivatives have been shown to induce chlorosis and necrosis during host plant infection, but also have antifungal activities. Two polyketide synthases, BOA6 and BOA9, are involved in the biosynthesis of botcinins. BOA6 mediates the formation of the per-methylated tetraketide core by condensation of four units of malonyl-CoA with one unit of acetyl-CoA, which would be methylated in activated methylene groups to yield a bicyclic acid intermediate that could then either be converted to botrylactone derivatives or lose the starter acetate unit through a retro-Claisen type C-C bond cleavage to yield botcinin derivatives. The second polyketide synthase, BOA9, is probably required for the biosynthesis of the tetraketide side chain of botcinins. The methyltransferase (MT) domain within BOA6 is probably responsible for the incorporation of four methyl groups. The trans-enoyl reductase BOA5 might take over the enoyl reductase function of BOA6 that misses an ER domain. The monooxygenases BOA2, BOA3 and BOA4 might be involved in further hydroxylations at C4, C5 and C8, whereas BOA7, close to BOA9, could potentially be involved in the hydroxylation at C4 in the side chain of botcinins. This is Cytochrome P450 monooxygenase BOA7 from Botryotinia fuckeliana (strain B05.10) (Noble rot fungus).